Here is a 172-residue protein sequence, read N- to C-terminus: 3-phenylpropionate/cinnamic acid dioxygenase subunit beta (172 aa).

This sequence belongs to the bacterial ring-hydroxylating dioxygenase beta subunit family. This dioxygenase system consists of four proteins: the two subunits of the hydroxylase component (HcaE and HcaF), a ferredoxin (HcaC) and a ferredoxin reductase (HcaD).

It carries out the reaction 3-phenylpropanoate + NADH + O2 + H(+) = 3-(cis-5,6-dihydroxycyclohexa-1,3-dien-1-yl)propanoate + NAD(+). The enzyme catalyses (E)-cinnamate + NADH + O2 + H(+) = (2E)-3-(cis-5,6-dihydroxycyclohexa-1,3-dien-1-yl)prop-2-enoate + NAD(+). It functions in the pathway aromatic compound metabolism; 3-phenylpropanoate degradation. In terms of biological role, part of the multicomponent 3-phenylpropionate dioxygenase. Converts 3-phenylpropionic acid (PP) and cinnamic acid (CI) into 3-phenylpropionate-dihydrodiol (PP-dihydrodiol) and cinnamic acid-dihydrodiol (CI-dihydrodiol), respectively. The protein is 3-phenylpropionate/cinnamic acid dioxygenase subunit beta of Escherichia coli O17:K52:H18 (strain UMN026 / ExPEC).